A 376-amino-acid chain; its full sequence is Cytochrome b (376 aa).

Transmembrane regions (helical) follow at residues 28–48, 72–94, 107–127, and 169–189; these read YGFL…FLAS, WCFR…LHIL, SWIS…IGYV, and FFVL…IHIF. The heme b site is built by His-78 and His-92. Residues His-173 and His-187 each coordinate heme b. His-192 is an a ubiquinone binding site. The next 4 helical transmembrane spans lie at 214-234, 274-294, 317-337, and 340-360; these read LLSL…IQSI, IPSK…LFLL, VPII…CQLP, and IFIL…LFAL.

The protein belongs to the cytochrome b family. In terms of assembly, the main subunits of complex b-c1 are: cytochrome b, cytochrome c1 and the Rieske protein. The cofactor is heme b.

The protein localises to the mitochondrion inner membrane. Functionally, component of the ubiquinol-cytochrome c reductase complex (complex III or cytochrome b-c1 complex) that is part of the mitochondrial respiratory chain. The b-c1 complex mediates electron transfer from ubiquinol to cytochrome c. Contributes to the generation of a proton gradient across the mitochondrial membrane that is then used for ATP synthesis. In Plasmodium chabaudi, this protein is Cytochrome b (MT-CYB).